A 425-amino-acid polypeptide reads, in one-letter code: Oxalate decarboxylase ARB_02208 (425 aa).

The signal sequence occupies residues Met1 to Ala19. In terms of domain architecture, Cupin type-1 1 spans Phe73 to Asp236. Residues His116, His118, Glu122, and His161 each coordinate Mn(2+). Residues Asn228, Asn247, Asn254, and Asn265 are each glycosylated (N-linked (GlcNAc...) asparagine). A Cupin type-1 2 domain is found at Phe270–Asp414. Residues His317, His319, Glu324, and His363 each coordinate Mn(2+). N-linked (GlcNAc...) asparagine glycosylation is present at Asn367. Glu378 functions as the Proton donor in the catalytic mechanism.

Mn(2+) is required as a cofactor.

The protein resides in the secreted. The enzyme catalyses oxalate + H(+) = formate + CO2. Its function is as follows. Converts oxalate to formate and CO(2) in an O(2)-dependent reaction. Can also catalyze minor side reactions: oxalate oxidation to produce H(2)O(2), and oxalate-dependent, H(2)O(2)-independent dye oxidations. This Arthroderma benhamiae (strain ATCC MYA-4681 / CBS 112371) (Trichophyton mentagrophytes) protein is Oxalate decarboxylase ARB_02208.